The sequence spans 224 residues: Cytochrome c biogenesis ATP-binding export protein CcmA (224 aa).

The ABC transporter domain occupies 1-220; sequence MQNAEAAPAL…EYAHAEVVGA (220 aa). 40–47 provides a ligand contact to ATP; the sequence is GANGSGKT.

It belongs to the ABC transporter superfamily. CcmA exporter (TC 3.A.1.107) family. As to quaternary structure, the complex is composed of two ATP-binding proteins (CcmA) and two transmembrane proteins (CcmB).

The protein localises to the cell inner membrane. The catalysed reaction is heme b(in) + ATP + H2O = heme b(out) + ADP + phosphate + H(+). Part of the ABC transporter complex CcmAB involved in the biogenesis of c-type cytochromes; once thought to export heme, this seems not to be the case, but its exact role is uncertain. Responsible for energy coupling to the transport system. In Bordetella parapertussis (strain 12822 / ATCC BAA-587 / NCTC 13253), this protein is Cytochrome c biogenesis ATP-binding export protein CcmA.